Reading from the N-terminus, the 283-residue chain is Elongation factor Ts (283 aa).

The tract at residues 80-83 (TDFV) is involved in Mg(2+) ion dislocation from EF-Tu.

Belongs to the EF-Ts family.

It localises to the cytoplasm. Functionally, associates with the EF-Tu.GDP complex and induces the exchange of GDP to GTP. It remains bound to the aminoacyl-tRNA.EF-Tu.GTP complex up to the GTP hydrolysis stage on the ribosome. The protein is Elongation factor Ts of Pectobacterium carotovorum subsp. carotovorum (strain PC1).